Consider the following 166-residue polypeptide: Probable chemoreceptor glutamine deamidase CheD 1 (166 aa).

The protein belongs to the CheD family.

It carries out the reaction L-glutaminyl-[protein] + H2O = L-glutamyl-[protein] + NH4(+). In terms of biological role, probably deamidates glutamine residues to glutamate on methyl-accepting chemotaxis receptors (MCPs), playing an important role in chemotaxis. This Leptospira interrogans serogroup Icterohaemorrhagiae serovar copenhageni (strain Fiocruz L1-130) protein is Probable chemoreceptor glutamine deamidase CheD 1.